The chain runs to 445 residues: Dolichyl-diphosphooligosaccharide--protein glycosyltransferase 48 kDa subunit (445 aa).

An N-terminal signal peptide occupies residues 1-32 (MRRRRKMEAGAAARAWSLLWLLLPLLGPVCAS). The Lumenal portion of the chain corresponds to 33–415 (GPRTLVLLDN…QYERFIPSAY (383 aa)). A helical membrane pass occupies residues 416–436 (PYYASAFSMMLGLFIFSTVFL). Topologically, residues 437–445 (HMKEKEKSD) are cytoplasmic.

This sequence belongs to the DDOST 48 kDa subunit family. In terms of assembly, component of the oligosaccharyltransferase (OST) complex. OST exists in two different complex forms which contain common core subunits RPN1, RPN2, OST48, OST4, DAD1 and TMEM258, either STT3A or STT3B as catalytic subunits, and form-specific accessory subunits. STT3A complex assembly occurs through the formation of 3 subcomplexes. Subcomplex 1 contains RPN1 and TMEM258, subcomplex 2 contains the STT3A-specific subunits STT3A, DC2/OSTC, and KCP2 as well as the core subunit OST4, and subcomplex 3 contains RPN2, DAD1, and OST48. The STT3A complex can form stable complexes with the Sec61 complex or with both the Sec61 and TRAP complexes. Interacts with SMIM22.

Its subcellular location is the endoplasmic reticulum. The protein resides in the endoplasmic reticulum membrane. Its pathway is protein modification; protein glycosylation. Subunit of the oligosaccharyl transferase (OST) complex that catalyzes the initial transfer of a defined glycan (Glc(3)Man(9)GlcNAc(2) in eukaryotes) from the lipid carrier dolichol-pyrophosphate to an asparagine residue within an Asn-X-Ser/Thr consensus motif in nascent polypeptide chains, the first step in protein N-glycosylation. N-glycosylation occurs cotranslationally and the complex associates with the Sec61 complex at the channel-forming translocon complex that mediates protein translocation across the endoplasmic reticulum (ER). All subunits are required for a maximal enzyme activity. Required for the assembly of both SST3A- and SS3B-containing OST complexes. The polypeptide is Dolichyl-diphosphooligosaccharide--protein glycosyltransferase 48 kDa subunit (Canis lupus familiaris (Dog)).